A 407-amino-acid chain; its full sequence is Argininosuccinate synthase (407 aa).

Residues 10–18 (AYSGGLDTS) and alanine 37 contribute to the ATP site. The L-citrulline site is built by tyrosine 88 and serine 93. An ATP-binding site is contributed by glycine 118. Residues threonine 120, asparagine 124, and aspartate 125 each contribute to the L-aspartate site. Residue asparagine 124 participates in L-citrulline binding. The L-citrulline site is built by arginine 128, serine 180, serine 189, glutamate 265, and tyrosine 277.

It belongs to the argininosuccinate synthase family. Type 1 subfamily. In terms of assembly, homotetramer.

It localises to the cytoplasm. The enzyme catalyses L-citrulline + L-aspartate + ATP = 2-(N(omega)-L-arginino)succinate + AMP + diphosphate + H(+). It functions in the pathway amino-acid biosynthesis; L-arginine biosynthesis; L-arginine from L-ornithine and carbamoyl phosphate: step 2/3. This is Argininosuccinate synthase from Alcanivorax borkumensis (strain ATCC 700651 / DSM 11573 / NCIMB 13689 / SK2).